The sequence spans 321 residues: Anthranilate phosphoribosyltransferase (321 aa).

5-phospho-alpha-D-ribose 1-diphosphate is bound by residues glycine 72, 75–76, threonine 80, 82–85, 99–107, and serine 111; these read GD, NVST, and KHGNVSITS. Glycine 72 is an anthranilate binding site. Residue serine 84 participates in Mg(2+) binding. Anthranilate is bound at residue asparagine 102. Arginine 157 serves as a coordination point for anthranilate. 2 residues coordinate Mg(2+): aspartate 216 and glutamate 217.

This sequence belongs to the anthranilate phosphoribosyltransferase family. As to quaternary structure, homodimer. Mg(2+) serves as cofactor.

It catalyses the reaction N-(5-phospho-beta-D-ribosyl)anthranilate + diphosphate = 5-phospho-alpha-D-ribose 1-diphosphate + anthranilate. It participates in amino-acid biosynthesis; L-tryptophan biosynthesis; L-tryptophan from chorismate: step 2/5. In terms of biological role, catalyzes the transfer of the phosphoribosyl group of 5-phosphorylribose-1-pyrophosphate (PRPP) to anthranilate to yield N-(5'-phosphoribosyl)-anthranilate (PRA). This is Anthranilate phosphoribosyltransferase from Methanococcus maripaludis (strain C6 / ATCC BAA-1332).